The chain runs to 204 residues: Protein GrpE (204 aa).

Composition is skewed to basic and acidic residues over residues Met1 to Gly21 and Glu36 to Lys46. The interval Met1–Lys46 is disordered.

The protein belongs to the GrpE family. Homodimer.

Its subcellular location is the cytoplasm. Its function is as follows. Participates actively in the response to hyperosmotic and heat shock by preventing the aggregation of stress-denatured proteins, in association with DnaK and GrpE. It is the nucleotide exchange factor for DnaK and may function as a thermosensor. Unfolded proteins bind initially to DnaJ; upon interaction with the DnaJ-bound protein, DnaK hydrolyzes its bound ATP, resulting in the formation of a stable complex. GrpE releases ADP from DnaK; ATP binding to DnaK triggers the release of the substrate protein, thus completing the reaction cycle. Several rounds of ATP-dependent interactions between DnaJ, DnaK and GrpE are required for fully efficient folding. This Caldanaerobacter subterraneus subsp. tengcongensis (strain DSM 15242 / JCM 11007 / NBRC 100824 / MB4) (Thermoanaerobacter tengcongensis) protein is Protein GrpE.